The following is a 129-amino-acid chain: Glycine cleavage system H protein (129 aa).

The region spanning 24 to 106 is the Lipoyl-binding domain; sequence IATIGISAFA…YGEGWLVKVR (83 aa). At K65 the chain carries N6-lipoyllysine.

It belongs to the GcvH family. The glycine cleavage system is composed of four proteins: P, T, L and H. Requires (R)-lipoate as cofactor.

Its function is as follows. The glycine cleavage system catalyzes the degradation of glycine. The H protein shuttles the methylamine group of glycine from the P protein to the T protein. The protein is Glycine cleavage system H protein of Cyanothece sp. (strain PCC 7425 / ATCC 29141).